The primary structure comprises 430 residues: 3-phosphoshikimate 1-carboxyvinyltransferase (430 aa).

Positions 20, 21, and 25 each coordinate 3-phosphoshikimate. Phosphoenolpyruvate is bound at residue Lys-20. Phosphoenolpyruvate-binding residues include Gly-90 and Arg-118. 3-phosphoshikimate is bound by residues Ser-163, Ser-164, Gln-165, Ser-191, Asp-311, and Lys-338. Gln-165 is a binding site for phosphoenolpyruvate. Asp-311 (proton acceptor) is an active-site residue. Phosphoenolpyruvate-binding residues include Arg-342 and Arg-383.

Belongs to the EPSP synthase family. As to quaternary structure, monomer.

It localises to the cytoplasm. It carries out the reaction 3-phosphoshikimate + phosphoenolpyruvate = 5-O-(1-carboxyvinyl)-3-phosphoshikimate + phosphate. It functions in the pathway metabolic intermediate biosynthesis; chorismate biosynthesis. Functionally, catalyzes the transfer of the enolpyruvyl moiety of phosphoenolpyruvate (PEP) to the 5-hydroxyl of shikimate-3-phosphate (S3P) to produce enolpyruvyl shikimate-3-phosphate and inorganic phosphate. The chain is 3-phosphoshikimate 1-carboxyvinyltransferase from Methanosarcina acetivorans (strain ATCC 35395 / DSM 2834 / JCM 12185 / C2A).